Here is a 562-residue protein sequence, read N- to C-terminus: Dihydroxy-acid dehydratase (562 aa).

D78 contributes to the Mg(2+) binding site. Residue C119 participates in [2Fe-2S] cluster binding. Residues D120 and K121 each coordinate Mg(2+). N6-carboxylysine is present on K121. A [2Fe-2S] cluster-binding site is contributed by C192. E449 provides a ligand contact to Mg(2+). S475 functions as the Proton acceptor in the catalytic mechanism.

The protein belongs to the IlvD/Edd family. In terms of assembly, homodimer. It depends on [2Fe-2S] cluster as a cofactor. The cofactor is Mg(2+).

The catalysed reaction is (2R)-2,3-dihydroxy-3-methylbutanoate = 3-methyl-2-oxobutanoate + H2O. It carries out the reaction (2R,3R)-2,3-dihydroxy-3-methylpentanoate = (S)-3-methyl-2-oxopentanoate + H2O. Its pathway is amino-acid biosynthesis; L-isoleucine biosynthesis; L-isoleucine from 2-oxobutanoate: step 3/4. It functions in the pathway amino-acid biosynthesis; L-valine biosynthesis; L-valine from pyruvate: step 3/4. Functions in the biosynthesis of branched-chain amino acids. Catalyzes the dehydration of (2R,3R)-2,3-dihydroxy-3-methylpentanoate (2,3-dihydroxy-3-methylvalerate) into 2-oxo-3-methylpentanoate (2-oxo-3-methylvalerate) and of (2R)-2,3-dihydroxy-3-methylbutanoate (2,3-dihydroxyisovalerate) into 2-oxo-3-methylbutanoate (2-oxoisovalerate), the penultimate precursor to L-isoleucine and L-valine, respectively. In Aliarcobacter butzleri (strain RM4018) (Arcobacter butzleri), this protein is Dihydroxy-acid dehydratase.